Here is a 382-residue protein sequence, read N- to C-terminus: Low-specificity L-threonine aldolase (382 aa).

The residue at position 214 (Lys-214) is an N6-(pyridoxal phosphate)lysine.

This sequence belongs to the threonine aldolase family. In terms of assembly, homotetramer. Pyridoxal 5'-phosphate serves as cofactor.

It carries out the reaction L-threonine = acetaldehyde + glycine. The catalysed reaction is L-allo-threonine = acetaldehyde + glycine. Its pathway is amino-acid degradation; L-threonine degradation via aldolase pathway; acetaldehyde and glycine from L-threonine: step 1/1. In Eremothecium gossypii (strain ATCC 10895 / CBS 109.51 / FGSC 9923 / NRRL Y-1056) (Yeast), this protein is Low-specificity L-threonine aldolase (GLY1).